The chain runs to 110 residues: Nucleoid-associated protein NFA_2940 (110 aa).

Belongs to the YbaB/EbfC family. In terms of assembly, homodimer.

Its subcellular location is the cytoplasm. It is found in the nucleoid. In terms of biological role, binds to DNA and alters its conformation. May be involved in regulation of gene expression, nucleoid organization and DNA protection. This Nocardia farcinica (strain IFM 10152) protein is Nucleoid-associated protein NFA_2940.